A 454-amino-acid chain; its full sequence is tRNA modification GTPase MnmE (454 aa).

3 residues coordinate (6S)-5-formyl-5,6,7,8-tetrahydrofolate: Arg-23, Glu-80, and Lys-120. The 162-residue stretch at 216–377 folds into the TrmE-type G domain; sequence GMKVVIAGRP…LRNHLKQSMG (162 aa). Asn-226 contributes to the K(+) binding site. GTP is bound by residues 226-231, 245-251, 270-273, 335-338, and 358-360; these read NAGKSS, TDIAGTT, DTAG, NKAD, and SAR. Ser-230 contacts Mg(2+). The K(+) site is built by Thr-245, Ile-247, and Thr-250. Mg(2+) is bound at residue Thr-251. Lys-454 serves as a coordination point for (6S)-5-formyl-5,6,7,8-tetrahydrofolate.

The protein belongs to the TRAFAC class TrmE-Era-EngA-EngB-Septin-like GTPase superfamily. TrmE GTPase family. As to quaternary structure, homodimer. Heterotetramer of two MnmE and two MnmG subunits. K(+) serves as cofactor.

It is found in the cytoplasm. Exhibits a very high intrinsic GTPase hydrolysis rate. Involved in the addition of a carboxymethylaminomethyl (cmnm) group at the wobble position (U34) of certain tRNAs, forming tRNA-cmnm(5)s(2)U34. This Salmonella arizonae (strain ATCC BAA-731 / CDC346-86 / RSK2980) protein is tRNA modification GTPase MnmE.